The chain runs to 76 residues: Conotoxin TxMEKL-011 (76 aa).

The first 19 residues, 1-19, serve as a signal peptide directing secretion; it reads MEKLTILLLVAAVLMSTQA. The propeptide occupies 20–45; it reads LVERAGENRSKENIKFLLKRKRAADR. 3 cysteine pairs are disulfide-bonded: cysteine 51–cysteine 65, cysteine 58–cysteine 69, and cysteine 64–cysteine 73.

This sequence belongs to the conotoxin O2 superfamily. In terms of tissue distribution, expressed by the venom duct.

Its subcellular location is the secreted. This Conus textile (Cloth-of-gold cone) protein is Conotoxin TxMEKL-011.